The sequence spans 1232 residues: MVILMIKIGFVSTIDSDDLVFEEAYKEIKKYGIEFKILDYKCSRKEFEEFLEFIKEANIVFTKLMGGKNAFKYYDELAEFCKRHNIPFLPLPTISEIHPDLEKDRTVDDDVKNKVVKYLGYEGVYNYKNLLLYLANRFGNLNVEYEEPRPMPWQGIYYKGKYFETLDDYLNYLKELGRDLDKPIIGVLFYRNWFVANNIDYVNDLIDIIENKGAIPIAVFSSHLKNELGSIGTLETFKRFFYKDGKPIVHALINTTMFTLSMGVKAELLKDEPEFLKELNVPILQGIISTGFIEDWKKSVSGLNPIDLIIGMAMPEFDGAIIHFPIGGKEKIKDGEVGVPIIKYRAIRDRAEKIVDLALRYANLKLKSNKDKKIAIIFHNYPPRNDKIASAFGLDSPESVVNILKEMKKRGFIVDEIPKNGTELIKKMLNYATNDKRFLTEEMIKKAVGKVKKEDYEKWFNSLSEKVKQELIKNWGAIPGDVMNFDGELIIPGIINGNVFISVQPPRGFGENPSAIYHSPDLPPTHYYIAFYKWIKDVFKADAIMHIGKHGNLEWLPGKCVGLSNECYPDICMELPNIYPFIVNNPGEGTQAKRRSYATIISHLIPPMTISDLYGDLVELEKSIDDYYETENKEKKEFLKKEILKKIKELKLDEDLLDGKVIDEEINDENFEKLLNKIHDYLETLKNRQINDGLHIMGVPLEGDKLVNMLFMIIRYQFNYLEILAEILDYSWEELNENKGKYHKILDEINEIGLNLLKEYMQYNFDENKIDELKTVKINSKLRDVLKTVSTIYKNLMKVDEEIINAVNALEGFYIPPRVAGAPTKDINCLPTGRNFYSCNPQEIPTKSAYEMGKKLAEDLINKYLKEEGKYPEYIGVIVWGSPTMRTKGDDIGEILYLLGVKPVWNKMGRVVGLEVIPLEELGRPRIDVTLRISGLFRDTFPNVVELIDEAIKMVANLDEPDEMNYVKKHYREEVEEKIKKGIDEKTAKETSLYRIFSDKPGCYGAGVSHLIDEKNWESIEDFAKVYVEWGGYAYGKGYYGVEAKEEFINRLSKIELTVKNEDSQEWDIFEGDDFNSYHGGLIASVTYYSGKKPVSYVGDTSNPNDIRTKHLKEEGKEIFRTKIMNPKWIEGMKRHGYKGAADFSKYVDHMFAWDATSGIIDDWMYEKIAEKYVFDKDMEEFFKENNPYALLNITERLLEAIERGMWKADEEMKEKLRKKYLEIEGMIEEKL.

Belongs to the Mg-chelatase subunit H family.

This is an uncharacterized protein from Methanocaldococcus jannaschii (strain ATCC 43067 / DSM 2661 / JAL-1 / JCM 10045 / NBRC 100440) (Methanococcus jannaschii).